The following is a 307-amino-acid chain: Putative serpin A13 (307 aa).

Residues 1-21 (MEASRWWLLVTVLMAGAHCVA) form the signal peptide. 2 N-linked (GlcNAc...) asparagine glycosylation sites follow: Asn150 and Asn250.

Belongs to the serpin family.

It is found in the secreted. The sequence is that of Putative serpin A13 (SERPINA13P) from Homo sapiens (Human).